The sequence spans 155 residues: Ribosomal RNA large subunit methyltransferase H (155 aa).

S-adenosyl-L-methionine contacts are provided by residues Leu-72, Gly-103, and 122-127; that span reads LSTMTL.

Belongs to the RNA methyltransferase RlmH family. As to quaternary structure, homodimer.

It is found in the cytoplasm. It catalyses the reaction pseudouridine(1915) in 23S rRNA + S-adenosyl-L-methionine = N(3)-methylpseudouridine(1915) in 23S rRNA + S-adenosyl-L-homocysteine + H(+). Specifically methylates the pseudouridine at position 1915 (m3Psi1915) in 23S rRNA. The sequence is that of Ribosomal RNA large subunit methyltransferase H from Nitrosomonas eutropha (strain DSM 101675 / C91 / Nm57).